The primary structure comprises 86 residues: ATP synthase subunit c (86 aa).

A run of 2 helical transmembrane segments spans residues valine 8 to isoleucine 28 and glycine 66 to leucine 86.

This sequence belongs to the ATPase C chain family. F-type ATPases have 2 components, F(1) - the catalytic core - and F(0) - the membrane proton channel. F(1) has five subunits: alpha(3), beta(3), gamma(1), delta(1), epsilon(1). F(0) has three main subunits: a(1), b(2) and c(10-14). The alpha and beta chains form an alternating ring which encloses part of the gamma chain. F(1) is attached to F(0) by a central stalk formed by the gamma and epsilon chains, while a peripheral stalk is formed by the delta and b chains.

It is found in the cell membrane. F(1)F(0) ATP synthase produces ATP from ADP in the presence of a proton or sodium gradient. F-type ATPases consist of two structural domains, F(1) containing the extramembraneous catalytic core and F(0) containing the membrane proton channel, linked together by a central stalk and a peripheral stalk. During catalysis, ATP synthesis in the catalytic domain of F(1) is coupled via a rotary mechanism of the central stalk subunits to proton translocation. Its function is as follows. Key component of the F(0) channel; it plays a direct role in translocation across the membrane. A homomeric c-ring of between 10-14 subunits forms the central stalk rotor element with the F(1) delta and epsilon subunits. The chain is ATP synthase subunit c from Natranaerobius thermophilus (strain ATCC BAA-1301 / DSM 18059 / JW/NM-WN-LF).